The primary structure comprises 857 residues: Protein argonaute-1 (857 aa).

The PAZ domain occupies 227–346 (PVIEFMCEVL…LPLEVCNIVA (120 aa)). Interaction with guide RNA regions lie at residues 309–314 (YFKQKY) and 522–564 (GKTP…LCLK). The Piwi domain occupies 515–816 (LIIVILPGKT…VAFRARYHLV (302 aa)). An impairs access of bound RNA to the active site region spans residues 670 to 675 (PEGQLP). Interaction with guide RNA regions lie at residues 708 to 712 (RHHTR), 751 to 759 (HAGIQGTSR), and 788 to 813 (YVRC…RARY).

The protein belongs to the argonaute family. Ago subfamily. Interacts with DDB1, DDX5, DDX6, DHX30, DHX36, DDX47, DICER1, AGO2, ELAVL1, HNRNPF, IGF2BP1, ILF3, IMP8, MATR3, MOV10, PABPC1, PRMT5, RBM4, SART3, TNRC6B, UPF1 and YBX1. Associates with polysomes and messenger ribonucleoproteins (mNRPs). Interacts with LIMD1, WTIP and AJUBA. Interacts with APOBEC3F, APOBEC3G and APOBEC3H. Post-translationally, ubiquitinated on surface-exposed lysines by a SCF-like E3 ubiquitin-protein ligase complex containing ZSWIM8 during target-directed microRNA degradation (TDMD), a process that mediates degradation of microRNAs (miRNAs). Ubiquitination by the SCF-like E3 ubiquitin-protein ligase complex containing ZSWIM8 leads to its subsequent degradation, thereby exposing miRNAs for degradation. ZSWIM8 recognizes and binds AGO1 when it is engaged with a TDMD target.

It is found in the cytoplasm. The protein localises to the P-body. In terms of biological role, required for RNA-mediated gene silencing (RNAi). Binds to short RNAs such as microRNAs (miRNAs) or short interfering RNAs (siRNAs), and represses the translation of mRNAs which are complementary to them. Lacks endonuclease activity and does not appear to cleave target mRNAs. Also required for transcriptional gene silencing (TGS) of promoter regions which are complementary to bound short antigene RNAs (agRNAs). The protein is Protein argonaute-1 (AGO1) of Homo sapiens (Human).